Reading from the N-terminus, the 138-residue chain is uncharacterized protein (138 aa).

The disordered stretch occupies residues 89-138 (DDYEDDFEDSDFQDGDFDDFEDEDGFDDDDDFEDDDFEYEDEDNDLDFDE).

This is an uncharacterized protein from Treponema pallidum (strain Nichols).